The following is a 423-amino-acid chain: Protein CLP1 homolog (423 aa).

ATP contacts are provided by residues glutamate 19, lysine 60, and 122 to 127 (DVGKTT).

This sequence belongs to the Clp1 family. Clp1 subfamily.

Its subcellular location is the nucleus. Required for endonucleolytic cleavage during polyadenylation-dependent pre-mRNA 3'-end formation. This chain is Protein CLP1 homolog (cbc), found in Anopheles gambiae (African malaria mosquito).